Reading from the N-terminus, the 512-residue chain is uncharacterized protein (512 aa).

The next 2 helical transmembrane spans lie at 20-40 (IFPV…IYIW) and 222-242 (GIAL…FGYI). Residues 297-512 (EQLIQSIEQT…TLMCYQIPLV (216 aa)) enclose the Histidine kinase domain. Phosphohistidine; by autocatalysis is present on H325.

Autophosphorylated.

It localises to the cell membrane. It catalyses the reaction ATP + protein L-histidine = ADP + protein N-phospho-L-histidine.. Functionally, probable member of the two-component regulatory system SE_0166/SE_0165. May activate SE_0165 by phosphorylation. This is an uncharacterized protein from Staphylococcus epidermidis (strain ATCC 12228 / FDA PCI 1200).